Consider the following 253-residue polypeptide: Homeotic protein ultrabithorax (253 aa).

Low complexity predominate over residues 125–141; the sequence is GNTSNGSNAPNAANGQN. Positions 125 to 193 are disordered; it reads GNTSNGSNAP…GNGTAGGVPQ (69 aa). Gly residues predominate over residues 176–189; the sequence is RGGGSAGGGNGTAG. An Antp-type hexapeptide motif is present at residues 237–242; sequence FYPWMA.

Belongs to the Antp homeobox family.

Its subcellular location is the nucleus. Sequence-specific transcription factor which is part of a developmental regulatory system that provides cells with specific positional identities on the anterior-posterior axis. Binds the consensus region 5'-TTAAT[GT][GA]-3'. This homeotic protein controls development of the cells in the posterior thoracic and first abdominal segments. It activates the synthesis of the decapentaplegic (DPP) growth factor. The protein is Homeotic protein ultrabithorax (Ubx) of Drosophila funebris (Fruit fly).